Here is a 938-residue protein sequence, read N- to C-terminus: Isoleucine--tRNA ligase (938 aa).

Residues 58–68 carry the 'HIGH' region motif; it reads PYANGNIHLGH. E562 contributes to the L-isoleucyl-5'-AMP binding site. A 'KMSKS' region motif is present at residues 603 to 607; the sequence is KMSKS. K606 lines the ATP pocket. The Zn(2+) site is built by C901, C904, C921, and C924.

The protein belongs to the class-I aminoacyl-tRNA synthetase family. IleS type 1 subfamily. As to quaternary structure, monomer. Zn(2+) is required as a cofactor.

The protein resides in the cytoplasm. The catalysed reaction is tRNA(Ile) + L-isoleucine + ATP = L-isoleucyl-tRNA(Ile) + AMP + diphosphate. Functionally, catalyzes the attachment of isoleucine to tRNA(Ile). As IleRS can inadvertently accommodate and process structurally similar amino acids such as valine, to avoid such errors it has two additional distinct tRNA(Ile)-dependent editing activities. One activity is designated as 'pretransfer' editing and involves the hydrolysis of activated Val-AMP. The other activity is designated 'posttransfer' editing and involves deacylation of mischarged Val-tRNA(Ile). The chain is Isoleucine--tRNA ligase from Glaesserella parasuis serovar 5 (strain SH0165) (Haemophilus parasuis).